We begin with the raw amino-acid sequence, 350 residues long: MGLKTTISPDSSFDKIINTKTSPPLHINSPMLESLALSKLFKEENAKVWMKVDALQPSGSFKIRGVGLLCNQLLKEKKSKNEEAHFICSSGGNAGKSVAYAGRKLNVKTTIVLPNTIPEATIEKIKDEGANVIVHGTIWDEANTFALELAEKEGCTDCYIHPFDHPLLWEGHSTMIDEIYQDVQNGVCEKPDVILFSVGGGGMMIGILQGLDRYGWNDIPIVTVETVGSHSFWKSFQEKQLTKLDVSEVTSVIKTLSTRSVCSEAWEISKRFNIKPILVTDRDAVDACLKFVDDERILVEPSCGATLSVLYSKKLSTLLDINSKNILTIVCGGNGTSILQLNDLLQTLPK.

N6-(pyridoxal phosphate)lysine is present on K62.

The protein belongs to the serine/threonine dehydratase family. Pyridoxal 5'-phosphate serves as cofactor.

The protein resides in the cytoplasm. It catalyses the reaction L-serine = pyruvate + NH4(+). It functions in the pathway carbohydrate biosynthesis; gluconeogenesis. In Dictyostelium discoideum (Social amoeba), this protein is L-serine dehydratase (sds).